Here is a 67-residue protein sequence, read N- to C-terminus: Conotoxin VnMMSK-02 (67 aa).

An N-terminal signal peptide occupies residues 1–20; it reads MMSKLGALLTICLLLFPLTA. Residues 21–52 constitute a propeptide that is removed on maturation; that stretch reads LPLDGDQPADRPAERMQDDISSEQHPLFDKER. Gln53 carries the pyrrolidone carboxylic acid modification. 3 disulfide bridges follow: Cys54–Cys66, Cys55–Cys62, and Cys59–Cys65. Residue Pro64 is modified to 4-hydroxyproline. Position 66 is a cysteine amide (Cys66).

Belongs to the conotoxin M superfamily. In terms of tissue distribution, expressed by the venom duct.

Its subcellular location is the secreted. The chain is Conotoxin VnMMSK-02 from Conus ventricosus (Mediterranean cone).